We begin with the raw amino-acid sequence, 363 residues long: Dihydroorotate dehydrogenase (quinone) (363 aa).

FMN contacts are provided by residues 67 to 71 (AGYDK) and threonine 91. Lysine 71 serves as a coordination point for substrate. 116–120 (NRMGF) is a substrate binding site. Asparagine 145 and asparagine 178 together coordinate FMN. Asparagine 178 lines the substrate pocket. The active-site Nucleophile is the serine 181. Asparagine 183 lines the substrate pocket. FMN contacts are provided by lysine 224 and threonine 254. Residue 255–256 (NT) participates in substrate binding. FMN contacts are provided by residues glycine 275, glycine 304, and 325–326 (YS).

It belongs to the dihydroorotate dehydrogenase family. Type 2 subfamily. As to quaternary structure, monomer. The cofactor is FMN.

The protein resides in the cell membrane. The catalysed reaction is (S)-dihydroorotate + a quinone = orotate + a quinol. It functions in the pathway pyrimidine metabolism; UMP biosynthesis via de novo pathway; orotate from (S)-dihydroorotate (quinone route): step 1/1. In terms of biological role, catalyzes the conversion of dihydroorotate to orotate with quinone as electron acceptor. This is Dihydroorotate dehydrogenase (quinone) from Acidithiobacillus ferrooxidans (strain ATCC 23270 / DSM 14882 / CIP 104768 / NCIMB 8455) (Ferrobacillus ferrooxidans (strain ATCC 23270)).